The chain runs to 476 residues: Adenylosuccinate synthetase, chloroplastic (476 aa).

Low complexity predominate over residues 1-20 (AAAAAGRGRSFSPAAPAPSS). A disordered region spans residues 1 to 34 (AAAAAGRGRSFSPAAPAPSSVRLPGRQAPAPAAA). GTP-binding positions include 63 to 69 (GDEGKGK) and 91 to 93 (GHT). The active-site Proton acceptor is D64. The Mg(2+) site is built by D64 and G91. Residues 64 to 67 (DEGK), 89 to 92 (NAGH), T181, R195, Q275, T290, and R354 contribute to the IMP site. H92 acts as the Proton donor in catalysis. 350–356 (TTTGRPR) contacts substrate. GTP-binding positions include R356, 382–384 (KLD), and 465–467 (GVG).

This sequence belongs to the adenylosuccinate synthetase family. As to quaternary structure, homodimer. Mg(2+) is required as a cofactor.

It localises to the plastid. Its subcellular location is the chloroplast. The catalysed reaction is IMP + L-aspartate + GTP = N(6)-(1,2-dicarboxyethyl)-AMP + GDP + phosphate + 2 H(+). It functions in the pathway purine metabolism; AMP biosynthesis via de novo pathway; AMP from IMP: step 1/2. Functionally, plays an important role in the de novo pathway and in the salvage pathway of purine nucleotide biosynthesis. Catalyzes the first committed step in the biosynthesis of AMP from IMP. The chain is Adenylosuccinate synthetase, chloroplastic from Triticum aestivum (Wheat).